A 361-amino-acid chain; its full sequence is Large ribosomal subunit protein uL3 (361 aa).

The disordered stretch occupies residues 339–361 (RPPKKKPPVQRPQITYVSVESKQ). The span at 350–361 (PQITYVSVESKQ) shows a compositional bias: polar residues.

It belongs to the universal ribosomal protein uL3 family. In terms of assembly, part of the 50S ribosomal subunit. Forms a cluster with proteins L14 and L24e.

Functionally, one of the primary rRNA binding proteins, it binds directly near the 3'-end of the 23S rRNA, where it nucleates assembly of the 50S subunit. This Pyrococcus abyssi (strain GE5 / Orsay) protein is Large ribosomal subunit protein uL3.